We begin with the raw amino-acid sequence, 264 residues long: Signal peptidase I (264 aa).

Topologically, residues 1–18 (MNRDNINSNKTVKQEFGS) are cytoplasmic. The helical transmembrane segment at 19–39 (FAFVICIALVIRILIMEPFTV) threads the bilayer. The Extracellular segment spans residues 40–264 (PTGSMKATIL…IFKNLYNVDE (225 aa)). Catalysis depends on residues Ser43 and Lys106.

The protein belongs to the peptidase S26 family.

The protein resides in the cell membrane. It carries out the reaction Cleavage of hydrophobic, N-terminal signal or leader sequences from secreted and periplasmic proteins.. The protein is Signal peptidase I (lepB) of Rickettsia prowazekii (strain Madrid E).